Here is a 180-residue protein sequence, read N- to C-terminus: Ribulose bisphosphate carboxylase small subunit, chloroplastic 2 (180 aa).

A chloroplast-targeting transit peptide spans 1-56 (MASSVISSAAVATRSNVTQASMVAPFTGLKSSATFPVTKKQNLDITSIASNGGRVS).

This sequence belongs to the RuBisCO small chain family. Heterohexadecamer of 8 large and 8 small subunits. As to quaternary structure, (Microbial infection) Binds to tobamovirus movement protein; this interaction seems required for viral systemic movement.

It localises to the plastid. It is found in the chloroplast. Its subcellular location is the cell junction. The protein localises to the plasmodesma. RuBisCO catalyzes two reactions: the carboxylation of D-ribulose 1,5-bisphosphate, the primary event in carbon dioxide fixation, as well as the oxidative fragmentation of the pentose substrate. Both reactions occur simultaneously and in competition at the same active site. Although the small subunit is not catalytic it is essential for maximal activity. Involved in antiviral defenses. In Solanum lycopersicum (Tomato), this protein is Ribulose bisphosphate carboxylase small subunit, chloroplastic 2.